Consider the following 313-residue polypeptide: 4-hydroxy-3-methylbut-2-enyl diphosphate reductase (313 aa).

Cys-12 is a binding site for [4Fe-4S] cluster. Residues His-41 and His-74 each contribute to the (2E)-4-hydroxy-3-methylbut-2-enyl diphosphate site. Residues His-41 and His-74 each contribute to the dimethylallyl diphosphate site. 2 residues coordinate isopentenyl diphosphate: His-41 and His-74. A [4Fe-4S] cluster-binding site is contributed by Cys-96. Residue His-124 coordinates (2E)-4-hydroxy-3-methylbut-2-enyl diphosphate. Residue His-124 participates in dimethylallyl diphosphate binding. His-124 provides a ligand contact to isopentenyl diphosphate. The active-site Proton donor is Glu-126. Thr-167 contributes to the (2E)-4-hydroxy-3-methylbut-2-enyl diphosphate binding site. Position 197 (Cys-197) interacts with [4Fe-4S] cluster. 4 residues coordinate (2E)-4-hydroxy-3-methylbut-2-enyl diphosphate: Ser-225, Ser-226, Asn-227, and Ser-269. Residues Ser-225, Ser-226, Asn-227, and Ser-269 each coordinate dimethylallyl diphosphate. The isopentenyl diphosphate site is built by Ser-225, Ser-226, Asn-227, and Ser-269.

Belongs to the IspH family. Homodimer. The cofactor is [4Fe-4S] cluster.

The catalysed reaction is isopentenyl diphosphate + 2 oxidized [2Fe-2S]-[ferredoxin] + H2O = (2E)-4-hydroxy-3-methylbut-2-enyl diphosphate + 2 reduced [2Fe-2S]-[ferredoxin] + 2 H(+). The enzyme catalyses dimethylallyl diphosphate + 2 oxidized [2Fe-2S]-[ferredoxin] + H2O = (2E)-4-hydroxy-3-methylbut-2-enyl diphosphate + 2 reduced [2Fe-2S]-[ferredoxin] + 2 H(+). It functions in the pathway isoprenoid biosynthesis; dimethylallyl diphosphate biosynthesis; dimethylallyl diphosphate from (2E)-4-hydroxy-3-methylbutenyl diphosphate: step 1/1. It participates in isoprenoid biosynthesis; isopentenyl diphosphate biosynthesis via DXP pathway; isopentenyl diphosphate from 1-deoxy-D-xylulose 5-phosphate: step 6/6. In terms of biological role, catalyzes the conversion of 1-hydroxy-2-methyl-2-(E)-butenyl 4-diphosphate (HMBPP) into a mixture of isopentenyl diphosphate (IPP) and dimethylallyl diphosphate (DMAPP). Acts in the terminal step of the DOXP/MEP pathway for isoprenoid precursor biosynthesis. The polypeptide is 4-hydroxy-3-methylbut-2-enyl diphosphate reductase (Buchnera aphidicola subsp. Schizaphis graminum (strain Sg)).